Here is a 251-residue protein sequence, read N- to C-terminus: Derlin-1 (251 aa).

An N-acetylserine modification is found at Ser-2. The Cytoplasmic portion of the chain corresponds to Ser-2–Thr-15. Residues Arg-16 to Leu-31 traverse the membrane as a helical segment. The Lumenal portion of the chain corresponds to Gly-32–Gly-69. A helical transmembrane segment spans residues Phe-70–Gly-89. Over Ala-90–Arg-94 the chain is Cytoplasmic. Residues Pro-95–Ala-115 form a helical membrane-spanning segment. At Met-116–Met-122 the chain is on the lumenal side. Residues Ile-123–Asn-137 traverse the membrane as a helical segment. The Cytoplasmic portion of the chain corresponds to Arg-138–Tyr-154. A helical transmembrane segment spans residues Leu-155–Ile-166. The Lumenal portion of the chain corresponds to Gly-167–Val-170. A helical membrane pass occupies residues Ile-171 to Arg-189. Residues Tyr-190–Gln-251 are Cytoplasmic-facing. Ser-201 carries the phosphoserine modification. A Phosphothreonine modification is found at Thr-202. Position 226 is a phosphoserine (Ser-226). The segment at Arg-229–Gln-251 is disordered. The SHP-box motif lies at Asn-241 to Leu-248.

Belongs to the derlin family. In terms of assembly, homotetramer. The four subunits of the tetramer are arranged in a twofold symmetry. Forms homo- and heterooligomers with DERL2 and DERL3; binding to DERL3 is poorer than that between DERL2 and DERL3. Interacts (via SHP-box motif) with VCP. Interacts with AMFR, SELENOS, SEL1L, SELENOK and SYVN1, as well as with SEL1L-SYVN1 and VCP-SELENOS protein complexes; this interaction is weaker than that observed between DERL2 and these complexes. Interacts with NGLY1 and YOD1. Does not bind to EDEM1. Interacts with DNAJB9. Interacts with RNF103. Interacts with HM13. Interacts with XBP1 isoform 1 (via luminal/ectodomain domain); the interaction obviates the need for ectodomain shedding prior HM13/SPP-mediated XBP1 isoform 1 cleavage. Interacts with the signal recognition particle/SRP and the SRP receptor; in the process of endoplasmic reticulum stress-induced pre-emptive quality control. May interact with UBXN6. Interacts with ZFAND2B; probably through VCP. Interacts with CCDC47. Interacts with C18orf32. May interact with TRAM1. Forms a complex with SVIP and VCP/p97.

The protein resides in the endoplasmic reticulum membrane. Functional component of endoplasmic reticulum-associated degradation (ERAD) for misfolded lumenal proteins. Forms homotetramers which encircle a large channel traversing the endoplasmic reticulum (ER) membrane. This allows the retrotranslocation of misfolded proteins from the ER into the cytosol where they are ubiquitinated and degraded by the proteasome. The channel has a lateral gate within the membrane which provides direct access to membrane proteins with no need to reenter the ER lumen first. May mediate the interaction between VCP and the misfolded protein. Also involved in endoplasmic reticulum stress-induced pre-emptive quality control, a mechanism that selectively attenuates the translocation of newly synthesized proteins into the endoplasmic reticulum and reroutes them to the cytosol for proteasomal degradation. By controlling the steady-state expression of the IGF1R receptor, indirectly regulates the insulin-like growth factor receptor signaling pathway. The polypeptide is Derlin-1 (Bos taurus (Bovine)).